Here is a 470-residue protein sequence, read N- to C-terminus: Argininosuccinate lyase (470 aa).

The protein belongs to the lyase 1 family. Argininosuccinate lyase subfamily.

It localises to the cytoplasm. The enzyme catalyses 2-(N(omega)-L-arginino)succinate = fumarate + L-arginine. It functions in the pathway amino-acid biosynthesis; L-arginine biosynthesis; L-arginine from L-ornithine and carbamoyl phosphate: step 3/3. The polypeptide is Argininosuccinate lyase (Mycobacterium marinum (strain ATCC BAA-535 / M)).